The following is a 120-amino-acid chain: Ribosome-binding factor A (120 aa).

The protein belongs to the RbfA family. In terms of assembly, monomer. Binds 30S ribosomal subunits, but not 50S ribosomal subunits or 70S ribosomes.

The protein resides in the cytoplasm. One of several proteins that assist in the late maturation steps of the functional core of the 30S ribosomal subunit. Associates with free 30S ribosomal subunits (but not with 30S subunits that are part of 70S ribosomes or polysomes). Required for efficient processing of 16S rRNA. May interact with the 5'-terminal helix region of 16S rRNA. The sequence is that of Ribosome-binding factor A from Lactobacillus delbrueckii subsp. bulgaricus (strain ATCC 11842 / DSM 20081 / BCRC 10696 / JCM 1002 / NBRC 13953 / NCIMB 11778 / NCTC 12712 / WDCM 00102 / Lb 14).